A 123-amino-acid chain; its full sequence is uncharacterized protein (123 aa).

A run of 2 helical transmembrane segments spans residues 53 to 73 (VWFL…FFFL) and 75 to 95 (VLWF…VFSH).

It is found in the membrane. This is an uncharacterized protein from Saccharomyces cerevisiae (strain ATCC 204508 / S288c) (Baker's yeast).